Consider the following 438-residue polypeptide: Ubiquitin carboxyl-terminal hydrolase 27 (438 aa).

Residues 78-421 (RGLINLGNTC…EGYLLFYHKQ (344 aa)) form the USP domain. Catalysis depends on C87, which acts as the Nucleophile. H380 functions as the Proton acceptor in the catalytic mechanism.

This sequence belongs to the peptidase C19 family. Interacts with phosphorylated BCL2L11 isoform BIMEL; this interaction leads to BCL2L11 deubiquitination and stabilization.

The protein resides in the cytoplasm. Its subcellular location is the cytosol. It localises to the nucleus. The catalysed reaction is Thiol-dependent hydrolysis of ester, thioester, amide, peptide and isopeptide bonds formed by the C-terminal Gly of ubiquitin (a 76-residue protein attached to proteins as an intracellular targeting signal).. Functionally, deubiquitinase involved in innate antiviral immunity by mediating deubiquitination of CGAS and RIGI. Negatively regulates RIGI by mediating 'Lys-63'-linked deubiquitination of RIGI, inhibiting type I interferon signaling. Also regulates 'Lys-63'-linked ubiquitination level of MDA5/IFIH1. Acts as a positive regulator of the cGAS-STING pathway by catalyzing 'Lys-48'-linked deubiquitination of CGAS, thereby promoting its stabilization. Can reduce the levels of BCL2L11/BIM ubiquitination and stabilize BCL2L11 in response to the RAF-MAPK-degradation signal. By acting on BCL2L11 levels, may counteract the anti-apoptotic effects of MAPK activity. The protein is Ubiquitin carboxyl-terminal hydrolase 27 of Homo sapiens (Human).